A 444-amino-acid polypeptide reads, in one-letter code: Chromosome partition protein MukF (444 aa).

Residues 212–240 (LDETSGNLRELQDTLNAAGDKLQAQLLRI) are leucine-zipper.

Belongs to the MukF family. In terms of assembly, interacts, and probably forms a ternary complex, with MukE and MukB via its C-terminal region. The complex formation is stimulated by calcium or magnesium. It is required for an interaction between MukE and MukB.

It localises to the cytoplasm. The protein resides in the nucleoid. Involved in chromosome condensation, segregation and cell cycle progression. May participate in facilitating chromosome segregation by condensation DNA from both sides of a centrally located replisome during cell division. Not required for mini-F plasmid partitioning. Probably acts via its interaction with MukB and MukE. Overexpression results in anucleate cells. It has a calcium binding activity. In Haemophilus influenzae (strain PittEE), this protein is Chromosome partition protein MukF.